The primary structure comprises 282 residues: Tyrosine recombinase XerA (282 aa).

The Core-binding (CB) domain maps to 2–79 (SEPNEVIEEF…ALRAYFRFEG (78 aa)). Residues 95-271 (SLPKALTREE…TVEHLRKAQE (177 aa)) enclose the Tyr recombinase domain. Active-site residues include Arg132, Lys157, His223, Arg226, and His249. Tyr258 serves as the catalytic O-(3'-phospho-DNA)-tyrosine intermediate.

The protein belongs to the 'phage' integrase family. XerA subfamily.

Its subcellular location is the cytoplasm. In terms of biological role, site-specific tyrosine recombinase, which acts by catalyzing the cutting and rejoining of the recombining DNA molecules. This chain is Tyrosine recombinase XerA, found in Thermococcus kodakarensis (strain ATCC BAA-918 / JCM 12380 / KOD1) (Pyrococcus kodakaraensis (strain KOD1)).